A 285-amino-acid polypeptide reads, in one-letter code: Putative phosphatase MG125 (285 aa).

Asp-8 (nucleophile) is an active-site residue. Asp-8 is a binding site for Mg(2+). Leu-9 contributes to the phosphate binding site. A Mg(2+)-binding site is contributed by Asp-10. Phosphate is bound by residues 44 to 45 (TG) and Lys-205. 2 residues coordinate Mg(2+): Asp-228 and Ser-229. Asn-231 provides a ligand contact to phosphate.

This sequence belongs to the HAD-like hydrolase superfamily. Cof family. The cofactor is Mg(2+).

In Mycoplasma genitalium (strain ATCC 33530 / DSM 19775 / NCTC 10195 / G37) (Mycoplasmoides genitalium), this protein is Putative phosphatase MG125.